The primary structure comprises 620 residues: Glutathione-regulated potassium-efflux system protein KefC (620 aa).

Transmembrane regions (helical) follow at residues 4–24 (HTLMQALIYLGSAALIVPIAV), 26–46 (LGLGSVLGYLIAGCIIGPWGL), 54–74 (SILHFAEIGVVLMLFVIGLEL), 90–110 (GALQMVICGGLIGFFCMFLGL), 114–134 (VAELIGMTLALSSTAIAMQAM), 149–169 (FAVLLFQDIAAIPLVAMIPLL), 178–198 (LGAFALSALKVAGALALVVLL), 218–238 (VFSAVALFLVFGFGLLLEEVG), 270–290 (GLLLGLFFIGVGMSIDFGTLV), 294–314 (LRILLLLAGFLAIKIVMLWLI), 327–347 (WFAVLLGQGSEFAFVVFGAAQ), and 359–379 (ALTLAVALSMAATPIFLVLLT). An RCK N-terminal domain is found at 399–518 (QPRVIVAGFG…AGVAMPERET (120 aa)). Residues 599 to 620 (QGTAEGKHTGDIADEPQVKPST) form a disordered region.

It belongs to the monovalent cation:proton antiporter 2 (CPA2) transporter (TC 2.A.37) family. KefC subfamily. Homodimer. Interacts with the regulatory subunit KefF.

Its subcellular location is the cell inner membrane. In terms of biological role, pore-forming subunit of a potassium efflux system that confers protection against electrophiles. Catalyzes K(+)/H(+) antiport. This Salmonella arizonae (strain ATCC BAA-731 / CDC346-86 / RSK2980) protein is Glutathione-regulated potassium-efflux system protein KefC.